Consider the following 227-residue polypeptide: UPF0758 protein Dhaf_4352 (227 aa).

The region spanning 105-227 (VINSPQDIAH…YISLKERGIL (123 aa)) is the MPN domain. Zn(2+) is bound by residues H176, H178, and D189. The JAMM motif motif lies at 176–189 (HNHPSGDPTPSSED).

The protein belongs to the UPF0758 family.

This is UPF0758 protein Dhaf_4352 from Desulfitobacterium hafniense (strain DSM 10664 / DCB-2).